Reading from the N-terminus, the 299-residue chain is Glutamyl-Q tRNA(Asp) synthetase (299 aa).

Residues Arg-9–Ser-13 and Glu-45 each bind L-glutamate. The short motif at Pro-12–Ser-22 is the 'HIGH' region element. Zn(2+) is bound by residues Cys-101, Cys-103, and Cys-118. L-glutamate is bound by residues Tyr-170 and Arg-188. Positions Lys-226 to Ser-230 match the 'KMSKS' region motif. Lys-229 serves as a coordination point for ATP.

It belongs to the class-I aminoacyl-tRNA synthetase family. GluQ subfamily. Requires Zn(2+) as cofactor.

Its function is as follows. Catalyzes the tRNA-independent activation of glutamate in presence of ATP and the subsequent transfer of glutamate onto a tRNA(Asp). Glutamate is transferred on the 2-amino-5-(4,5-dihydroxy-2-cyclopenten-1-yl) moiety of the queuosine in the wobble position of the QUC anticodon. In Xanthomonas axonopodis pv. citri (strain 306), this protein is Glutamyl-Q tRNA(Asp) synthetase.